Reading from the N-terminus, the 374-residue chain is Secondary metabolism regulator laeA (374 aa).

The segment at 1–75 (MFEMGPVGTR…NRNGSPSMSP (75 aa)) is disordered. Residues 23–40 (SYHSPTSSDRGRSRQNSD) are compositionally biased toward polar residues. Position 207 is an S-methylmethionine (Met-207).

This sequence belongs to the methyltransferase superfamily. LaeA methyltransferase family. Component of the heterotrimeric velvet complex composed of laeA, veA and velB; VeA acting as a bridging protein between laeA and velB. Post-translationally, self-methylates at Met-207.

Its subcellular location is the nucleus. The catalysed reaction is L-methionyl-[protein] + S-adenosyl-L-methionine = S-methyl-L-methionyl-[protein] + S-adenosyl-L-homocysteine. In terms of biological role, methyltransferase that performs automethylation at Met-207. No other methyl-accepting substrate has been identified yet. Component of the velvet transcription factor complex that acts as a global regulator for secondary metabolite gene expression. Controls the expression of the sterigmatocystin, penicillin, and lovastatin gene clusters. Controls light-dependent formation of the velB-vosA complex, veA protein modification, and is required for light-mediated inhibition of sexual development. Within the velvet complex, controls light-dependent secondary metabolism. Involved in the defense response against Drosophila melanogaster larval grazing. The protein is Secondary metabolism regulator laeA of Emericella nidulans (Aspergillus nidulans).